Consider the following 54-residue polypeptide: Photosystem II reaction center protein K (54 aa).

Residues 1–17 (MSFENFAIITLKENVFA) constitute a propeptide that is removed on maturation. The chain crosses the membrane as a helical span at residues 33–53 (LPIIPVLFLLLAFVWQSAVKF).

This sequence belongs to the PsbK family. As to quaternary structure, PSII is composed of 1 copy each of membrane proteins PsbA, PsbB, PsbC, PsbD, PsbE, PsbF, PsbH, PsbI, PsbJ, PsbK, PsbL, PsbM, PsbT, PsbY, PsbZ, Psb30/Ycf12, at least 3 peripheral proteins of the oxygen-evolving complex and a large number of cofactors. It forms dimeric complexes.

It localises to the plastid. The protein resides in the chloroplast thylakoid membrane. In terms of biological role, one of the components of the core complex of photosystem II (PSII). PSII is a light-driven water:plastoquinone oxidoreductase that uses light energy to abstract electrons from H(2)O, generating O(2) and a proton gradient subsequently used for ATP formation. It consists of a core antenna complex that captures photons, and an electron transfer chain that converts photonic excitation into a charge separation. The polypeptide is Photosystem II reaction center protein K (Euglena deses).